The sequence spans 640 residues: Arogenate dehydrogenase 1, chloroplastic (640 aa).

A chloroplast-targeting transit peptide spans 1 to 18; sequence MAETLITKPPLSLSFTSL. Prephenate/arogenate dehydrogenase domains lie at 53-334 and 365-640; these read LRIA…GEND and LKIG…LLTS.

This sequence belongs to the prephenate/arogenate dehydrogenase family. As to expression, expressed in roots, stems, leaves, flowers, siliques and seeds. More abundant in seeds.

It is found in the plastid. It localises to the chloroplast. It carries out the reaction L-arogenate + NADP(+) = L-tyrosine + CO2 + NADPH. The protein operates within amino-acid biosynthesis; L-tyrosine biosynthesis; L-tyrosine from L-arogenate (NADP(+) route): step 1/1. In terms of biological role, involved in the biosynthesis of tyrosine. Has no prephenate dehydrogenase activity. The chain is Arogenate dehydrogenase 1, chloroplastic (TYRAAT1) from Arabidopsis thaliana (Mouse-ear cress).